Consider the following 172-residue polypeptide: Large ribosomal subunit protein uL10 (172 aa).

It belongs to the universal ribosomal protein uL10 family. As to quaternary structure, part of the ribosomal stalk of the 50S ribosomal subunit. The N-terminus interacts with L11 and the large rRNA to form the base of the stalk. The C-terminus forms an elongated spine to which L12 dimers bind in a sequential fashion forming a multimeric L10(L12)X complex.

In terms of biological role, forms part of the ribosomal stalk, playing a central role in the interaction of the ribosome with GTP-bound translation factors. This Chlamydia trachomatis serovar A (strain ATCC VR-571B / DSM 19440 / HAR-13) protein is Large ribosomal subunit protein uL10.